Consider the following 181-residue polypeptide: ATP synthase subunit delta (181 aa).

This sequence belongs to the ATPase delta chain family. As to quaternary structure, F-type ATPases have 2 components, F(1) - the catalytic core - and F(0) - the membrane proton channel. F(1) has five subunits: alpha(3), beta(3), gamma(1), delta(1), epsilon(1). F(0) has three main subunits: a(1), b(2) and c(10-14). The alpha and beta chains form an alternating ring which encloses part of the gamma chain. F(1) is attached to F(0) by a central stalk formed by the gamma and epsilon chains, while a peripheral stalk is formed by the delta and b chains.

The protein resides in the cell inner membrane. In terms of biological role, f(1)F(0) ATP synthase produces ATP from ADP in the presence of a proton or sodium gradient. F-type ATPases consist of two structural domains, F(1) containing the extramembraneous catalytic core and F(0) containing the membrane proton channel, linked together by a central stalk and a peripheral stalk. During catalysis, ATP synthesis in the catalytic domain of F(1) is coupled via a rotary mechanism of the central stalk subunits to proton translocation. This protein is part of the stalk that links CF(0) to CF(1). It either transmits conformational changes from CF(0) to CF(1) or is implicated in proton conduction. This is ATP synthase subunit delta from Chlorobium phaeovibrioides (strain DSM 265 / 1930) (Prosthecochloris vibrioformis (strain DSM 265)).